We begin with the raw amino-acid sequence, 256 residues long: Hypodermin-A (256 aa).

A signal peptide spans methionine 1–glycine 22. Residues methionine 23–arginine 30 constitute a propeptide, activation peptide. Residues isoleucine 31–glutamate 254 enclose the Peptidase S1 domain. A disulfide bond links cysteine 56 and cysteine 72. Active-site charge relay system residues include histidine 71 and aspartate 116. Intrachain disulfides connect cysteine 180–cysteine 197 and cysteine 206–cysteine 230. The active-site Charge relay system is the serine 210.

The protein belongs to the peptidase S1 family.

Its subcellular location is the secreted. Its function is as follows. Specificity, limited to carboxyl side of arginine residue in B-chain of insulin. The polypeptide is Hypodermin-A (Hypoderma lineatum (Early cattle grub)).